We begin with the raw amino-acid sequence, 595 residues long: Proline--tRNA ligase (595 aa).

The disordered stretch occupies residues 1–22 (MKMSTMFGATLHTAPGRSESEG).

Belongs to the class-II aminoacyl-tRNA synthetase family. ProS type 1 subfamily. In terms of assembly, homodimer.

It is found in the cytoplasm. The catalysed reaction is tRNA(Pro) + L-proline + ATP = L-prolyl-tRNA(Pro) + AMP + diphosphate. Functionally, catalyzes the attachment of proline to tRNA(Pro) in a two-step reaction: proline is first activated by ATP to form Pro-AMP and then transferred to the acceptor end of tRNA(Pro). As ProRS can inadvertently accommodate and process non-cognate amino acids such as alanine and cysteine, to avoid such errors it has two additional distinct editing activities against alanine. One activity is designated as 'pretransfer' editing and involves the tRNA(Pro)-independent hydrolysis of activated Ala-AMP. The other activity is designated 'posttransfer' editing and involves deacylation of mischarged Ala-tRNA(Pro). The misacylated Cys-tRNA(Pro) is not edited by ProRS. This is Proline--tRNA ligase from Salinispora tropica (strain ATCC BAA-916 / DSM 44818 / JCM 13857 / NBRC 105044 / CNB-440).